A 206-amino-acid polypeptide reads, in one-letter code: Small ribosomal subunit protein uS4 (206 aa).

The S4 RNA-binding domain maps to 96-156 (SRLDNVVYRM…EKSKNQLRIQ (61 aa)).

Belongs to the universal ribosomal protein uS4 family. As to quaternary structure, part of the 30S ribosomal subunit. Contacts protein S5. The interaction surface between S4 and S5 is involved in control of translational fidelity.

Functionally, one of the primary rRNA binding proteins, it binds directly to 16S rRNA where it nucleates assembly of the body of the 30S subunit. Its function is as follows. With S5 and S12 plays an important role in translational accuracy. This is Small ribosomal subunit protein uS4 from Teredinibacter turnerae (strain ATCC 39867 / T7901).